Reading from the N-terminus, the 210-residue chain is Scoloptoxin SSD552 (210 aa).

Positions 1–23 (MNILLSSTLFVLLMFQIIGSGMG) are cleaved as a signal peptide.

In terms of processing, contains 3 disulfide bonds. Expressed by the venom gland.

The protein resides in the secreted. The protein is Scoloptoxin SSD552 of Scolopendra dehaani (Thai centipede).